A 321-amino-acid polypeptide reads, in one-letter code: Porphobilinogen deaminase (321 aa).

C246 bears the S-(dipyrrolylmethanemethyl)cysteine mark.

Belongs to the HMBS family. In terms of assembly, monomer. Dipyrromethane serves as cofactor.

It catalyses the reaction 4 porphobilinogen + H2O = hydroxymethylbilane + 4 NH4(+). It functions in the pathway porphyrin-containing compound metabolism; protoporphyrin-IX biosynthesis; coproporphyrinogen-III from 5-aminolevulinate: step 2/4. Functionally, tetrapolymerization of the monopyrrole PBG into the hydroxymethylbilane pre-uroporphyrinogen in several discrete steps. This is Porphobilinogen deaminase from Helicobacter hepaticus (strain ATCC 51449 / 3B1).